A 74-amino-acid polypeptide reads, in one-letter code: WAP four-disulfide core domain protein 18 (74 aa).

The signal sequence occupies residues 1 to 24 (MKTATVFVLVALIFMTMTTAWALS). Positions 26–73 (PKEKPGACPKPPPRSFGTCDERCTGDGSCSGNMKCCSNGCGHACKPPV) constitute a WAP domain.

It localises to the secreted. Its function is as follows. Could have proteinase inhibiting capacity. In Bos taurus (Bovine), this protein is WAP four-disulfide core domain protein 18 (WFDC18).